Reading from the N-terminus, the 205-residue chain is Listeria nuclear targeted protein A (205 aa).

The first 36 residues, 1-36 (MKKLVAWFNGLSKMWKVVVIIGAVFVVIIALTTGED), serve as a signal peptide directing secretion.

Interacts specifically with host BAHD1.

It is found in the secreted. It localises to the host nucleus. Functionally, relieves the repression of host cell immune response genes (interferon-stimulated genes) by blocking the recruitment of host BAHD1 to these genes. May modulate interferon-mediated immune response to control bacterial colonization of the host. The polypeptide is Listeria nuclear targeted protein A (lntA) (Listeria monocytogenes serovar 1/2a (strain ATCC BAA-679 / EGD-e)).